Consider the following 297-residue polypeptide: uncharacterized protein (297 aa).

6 helical membrane passes run 26 to 48, 80 to 102, 134 to 156, 185 to 205, 225 to 247, and 262 to 284; these read FVLH…IYAI, NIEL…AALF, LFKF…INLG, LGIF…AIVI, LVDT…VAAY, and LVAV…VELY.

The protein localises to the cell membrane. This is an uncharacterized protein from Archaeoglobus fulgidus (strain ATCC 49558 / DSM 4304 / JCM 9628 / NBRC 100126 / VC-16).